Here is a 150-residue protein sequence, read N- to C-terminus: MKLNELYNNIGAKKNKKRIARGIGSGKGKTAGRGIKGQKSRSGVAIKGFEGGQTPMIKRLPKRGFKCISTKKYNIINIYNIEKALTDGRLSTNNIITKEKLIEIGLINNKNLVKLLSICSDDFASPLSLKLDAYSSKAKYLIEKAGGQLL.

The protein belongs to the universal ribosomal protein uL15 family. As to quaternary structure, part of the 50S ribosomal subunit.

In terms of biological role, binds to the 23S rRNA. The polypeptide is Large ribosomal subunit protein uL15 (Rickettsia typhi (strain ATCC VR-144 / Wilmington)).